The sequence spans 366 residues: Ribosomal RNA large subunit methyltransferase M (366 aa).

Residues Ser-188, 221–224 (CPGG), Asp-240, Asp-260, and Asp-277 contribute to the S-adenosyl-L-methionine site. Lys-306 serves as the catalytic Proton acceptor.

The protein belongs to the class I-like SAM-binding methyltransferase superfamily. RNA methyltransferase RlmE family. RlmM subfamily. Monomer.

The protein localises to the cytoplasm. The enzyme catalyses cytidine(2498) in 23S rRNA + S-adenosyl-L-methionine = 2'-O-methylcytidine(2498) in 23S rRNA + S-adenosyl-L-homocysteine + H(+). Its function is as follows. Catalyzes the 2'-O-methylation at nucleotide C2498 in 23S rRNA. The polypeptide is Ribosomal RNA large subunit methyltransferase M (Photorhabdus asymbiotica subsp. asymbiotica (strain ATCC 43949 / 3105-77) (Xenorhabdus luminescens (strain 2))).